Reading from the N-terminus, the 450-residue chain is tRNA-2-methylthio-N(6)-dimethylallyladenosine synthase (450 aa).

An MTTase N-terminal domain is found at 14–132 (GEFFIETWGC…FPNYLNEVKK (119 aa)). [4Fe-4S] cluster is bound by residues cysteine 23, cysteine 59, cysteine 93, cysteine 169, cysteine 173, and cysteine 176. Residues 155–385 (RKNSMKAFVT…VEVLNEISAK (231 aa)) form the Radical SAM core domain. The region spanning 388–450 (KAYEGKIEEV…NSFSLTGEEI (63 aa)) is the TRAM domain.

Belongs to the methylthiotransferase family. MiaB subfamily. In terms of assembly, monomer. [4Fe-4S] cluster is required as a cofactor.

It is found in the cytoplasm. The enzyme catalyses N(6)-dimethylallyladenosine(37) in tRNA + (sulfur carrier)-SH + AH2 + 2 S-adenosyl-L-methionine = 2-methylsulfanyl-N(6)-dimethylallyladenosine(37) in tRNA + (sulfur carrier)-H + 5'-deoxyadenosine + L-methionine + A + S-adenosyl-L-homocysteine + 2 H(+). Its function is as follows. Catalyzes the methylthiolation of N6-(dimethylallyl)adenosine (i(6)A), leading to the formation of 2-methylthio-N6-(dimethylallyl)adenosine (ms(2)i(6)A) at position 37 in tRNAs that read codons beginning with uridine. The sequence is that of tRNA-2-methylthio-N(6)-dimethylallyladenosine synthase from Clostridium botulinum (strain ATCC 19397 / Type A).